Consider the following 362-residue polypeptide: Very-long-chain (3R)-3-hydroxyacyl-CoA dehydratase 3 (362 aa).

M1 carries the post-translational modification N-acetylmethionine. Topologically, residues 1–149 are cytoplasmic; it reads MENQVLTPHV…ETLTNLRKGY (149 aa). Residues 5–94 form the CS domain; it reads VLTPHVYWAQ…KVSQWWERLT (90 aa). The residue at position 7 (T7) is a Phosphothreonine. Positions 111-136 form a coiled coil; it reads LDESDAEMELRAKEEERLNKLRLESE. A phosphoserine mark is found at S114 and S135. The chain crosses the membrane as a helical span at residues 150 to 170; it reads LFMYNLVQFLGFSWIFVNLTV. The Lumenal portion of the chain corresponds to 171-185; that stretch reads RFCILGKESFYDTFH. A helical membrane pass occupies residues 186 to 207; it reads TVADMMYFCQMLAVVETINAAI. At 208–217 the chain is on the cytoplasmic side; the sequence is GVTTSPVLPS. A helical membrane pass occupies residues 218–235; it reads LIQLLGRNFILFIIFGTM. Topologically, residues 236–241 are lumenal; it reads EEMQNK. A helical transmembrane segment spans residues 242 to 256; that stretch reads AVVFFVFYLWSAIEI. The Cytoplasmic segment spans residues 257–279; that stretch reads FRYSFYMLTCIDMDWKVLTWLRY. The helical transmembrane segment at 280 to 298 threads the bilayer; sequence TLWIPLYPLGCLAEAVSVI. Catalysis depends on residues Y286 and E293. The Lumenal segment spans residues 299 to 322; that stretch reads QSIPIFNETGRFSFTLPYPVKIKV. The helical transmembrane segment at 323–343 threads the bilayer; that stretch reads RFSFFLQIYLIMIFLGLYINF. Residues 344–362 lie on the Cytoplasmic side of the membrane; sequence RHLYKQRRRRYGQKKKKIH.

It belongs to the very long-chain fatty acids dehydratase HACD family. In terms of assembly, may interact with enzymes of the ELO family (including ELOVL1); with those enzymes that mediate condensation, the first of the four steps of the reaction cycle responsible for fatty acids elongation, may be part of a larger fatty acids elongase complex. Interacts with RAC1. Associates with internalized insulin receptor/INSR complexes on Golgi/endosomal membranes; HACD3/PTPLAD1 together with ATIC and PRKAA2/AMPK2 is proposed to be part of a signaling network regulating INSR autophosphorylation and endocytosis. Highly expressed in testis, kidney, brain, liver and weakly in skeletal muscle, spleen and heart. No expression detected in leukocytes.

Its subcellular location is the endoplasmic reticulum membrane. It catalyses the reaction a very-long-chain (3R)-3-hydroxyacyl-CoA = a very-long-chain (2E)-enoyl-CoA + H2O. The catalysed reaction is (3R)-hydroxyhexadecanoyl-CoA = (2E)-hexadecenoyl-CoA + H2O. The protein operates within lipid metabolism; fatty acid biosynthesis. In terms of biological role, catalyzes the third of the four reactions of the long-chain fatty acids elongation cycle. This endoplasmic reticulum-bound enzymatic process, allows the addition of two carbons to the chain of long- and very long-chain fatty acids/VLCFAs per cycle. This enzyme catalyzes the dehydration of the 3-hydroxyacyl-CoA intermediate into trans-2,3-enoyl-CoA, within each cycle of fatty acid elongation. Thereby, it participates in the production of VLCFAs of different chain lengths that are involved in multiple biological processes as precursors of membrane lipids and lipid mediators. May be involved in Rac1-signaling pathways leading to the modulation of gene expression. Promotes insulin receptor/INSR autophosphorylation and is involved in INSR internalization. The protein is Very-long-chain (3R)-3-hydroxyacyl-CoA dehydratase 3 of Homo sapiens (Human).